The chain runs to 179 residues: ATP-dependent protease subunit HslV (179 aa).

The active site involves threonine 8. Na(+) is bound by residues glycine 163, cysteine 166, and threonine 169.

This sequence belongs to the peptidase T1B family. HslV subfamily. In terms of assembly, a double ring-shaped homohexamer of HslV is capped on each side by a ring-shaped HslU homohexamer. The assembly of the HslU/HslV complex is dependent on binding of ATP.

It localises to the cytoplasm. The catalysed reaction is ATP-dependent cleavage of peptide bonds with broad specificity.. Allosterically activated by HslU binding. In terms of biological role, protease subunit of a proteasome-like degradation complex believed to be a general protein degrading machinery. In Solibacter usitatus (strain Ellin6076), this protein is ATP-dependent protease subunit HslV.